We begin with the raw amino-acid sequence, 316 residues long: 4-hydroxy-3-methylbut-2-enyl diphosphate reductase (316 aa).

Cys12 serves as a coordination point for [4Fe-4S] cluster. Positions 41 and 74 each coordinate (2E)-4-hydroxy-3-methylbut-2-enyl diphosphate. Residues His41 and His74 each contribute to the dimethylallyl diphosphate site. Positions 41 and 74 each coordinate isopentenyl diphosphate. Cys96 contributes to the [4Fe-4S] cluster binding site. His124 lines the (2E)-4-hydroxy-3-methylbut-2-enyl diphosphate pocket. His124 serves as a coordination point for dimethylallyl diphosphate. His124 is an isopentenyl diphosphate binding site. The active-site Proton donor is the Glu126. Position 167 (Thr167) interacts with (2E)-4-hydroxy-3-methylbut-2-enyl diphosphate. A [4Fe-4S] cluster-binding site is contributed by Cys197. Positions 225, 226, 227, and 269 each coordinate (2E)-4-hydroxy-3-methylbut-2-enyl diphosphate. Positions 225, 226, 227, and 269 each coordinate dimethylallyl diphosphate. Ser225, Ser226, Asn227, and Ser269 together coordinate isopentenyl diphosphate.

It belongs to the IspH family. As to quaternary structure, homodimer. [4Fe-4S] cluster serves as cofactor.

It catalyses the reaction isopentenyl diphosphate + 2 oxidized [2Fe-2S]-[ferredoxin] + H2O = (2E)-4-hydroxy-3-methylbut-2-enyl diphosphate + 2 reduced [2Fe-2S]-[ferredoxin] + 2 H(+). The catalysed reaction is dimethylallyl diphosphate + 2 oxidized [2Fe-2S]-[ferredoxin] + H2O = (2E)-4-hydroxy-3-methylbut-2-enyl diphosphate + 2 reduced [2Fe-2S]-[ferredoxin] + 2 H(+). It functions in the pathway isoprenoid biosynthesis; dimethylallyl diphosphate biosynthesis; dimethylallyl diphosphate from (2E)-4-hydroxy-3-methylbutenyl diphosphate: step 1/1. Its pathway is isoprenoid biosynthesis; isopentenyl diphosphate biosynthesis via DXP pathway; isopentenyl diphosphate from 1-deoxy-D-xylulose 5-phosphate: step 6/6. In terms of biological role, catalyzes the conversion of 1-hydroxy-2-methyl-2-(E)-butenyl 4-diphosphate (HMBPP) into a mixture of isopentenyl diphosphate (IPP) and dimethylallyl diphosphate (DMAPP). Acts in the terminal step of the DOXP/MEP pathway for isoprenoid precursor biosynthesis. The protein is 4-hydroxy-3-methylbut-2-enyl diphosphate reductase of Salmonella typhi.